A 257-amino-acid polypeptide reads, in one-letter code: UPF0246 protein BAV2675 (257 aa).

This sequence belongs to the UPF0246 family.

This Bordetella avium (strain 197N) protein is UPF0246 protein BAV2675.